Reading from the N-terminus, the 527-residue chain is GMP synthase [glutamine-hydrolyzing] (527 aa).

One can recognise a Glutamine amidotransferase type-1 domain in the interval 20-208 (SVVILDYGSQ…LFDVCGCAPT (189 aa)). The active-site Nucleophile is Cys97. Active-site residues include His182 and Glu184. The GMPS ATP-PPase domain maps to 209–402 (WTAESFVEQA…LGLPEEIVQR (194 aa)). Residue 236-242 (SGGVDSS) coordinates ATP.

Homodimer.

It carries out the reaction XMP + L-glutamine + ATP + H2O = GMP + L-glutamate + AMP + diphosphate + 2 H(+). It functions in the pathway purine metabolism; GMP biosynthesis; GMP from XMP (L-Gln route): step 1/1. In terms of biological role, catalyzes the synthesis of GMP from XMP. In Thermomicrobium roseum (strain ATCC 27502 / DSM 5159 / P-2), this protein is GMP synthase [glutamine-hydrolyzing].